Consider the following 245-residue polypeptide: RNA polymerase sigma factor SigI5 (245 aa).

Residues 60–73 (DEYSIGLMAFNEAI) carry the Polymerase core binding motif. Residues 202-221 (MKELSKIIDVHPKTVERNRA) constitute a DNA-binding region (H-T-H motif).

This sequence belongs to the sigma-70 factor family. SigI subfamily. In terms of assembly, interacts with RsgI5.

Its subcellular location is the cytoplasm. Negatively regulated by the anti-sigma-I factor RsgI5. Binding of the polysaccharide substrate to RsgI5 may lead to the release and activation of SigI5. Sigma factors are initiation factors that promote the attachment of RNA polymerase to specific initiation sites and are then released. This sigma factor is involved in regulation of cellulosomal genes via an external polysaccharide-sensing mechanism. This is RNA polymerase sigma factor SigI5 from Acetivibrio thermocellus (strain ATCC 27405 / DSM 1237 / JCM 9322 / NBRC 103400 / NCIMB 10682 / NRRL B-4536 / VPI 7372) (Clostridium thermocellum).